Reading from the N-terminus, the 258-residue chain is Acyl-[acyl-carrier-protein]--UDP-N-acetylglucosamine O-acyltransferase (258 aa).

It belongs to the transferase hexapeptide repeat family. LpxA subfamily. Homotrimer.

Its subcellular location is the cytoplasm. The catalysed reaction is a (3R)-hydroxyacyl-[ACP] + UDP-N-acetyl-alpha-D-glucosamine = a UDP-3-O-[(3R)-3-hydroxyacyl]-N-acetyl-alpha-D-glucosamine + holo-[ACP]. It participates in glycolipid biosynthesis; lipid IV(A) biosynthesis; lipid IV(A) from (3R)-3-hydroxytetradecanoyl-[acyl-carrier-protein] and UDP-N-acetyl-alpha-D-glucosamine: step 1/6. Involved in the biosynthesis of lipid A, a phosphorylated glycolipid that anchors the lipopolysaccharide to the outer membrane of the cell. This is Acyl-[acyl-carrier-protein]--UDP-N-acetylglucosamine O-acyltransferase from Pseudomonas putida (strain W619).